Consider the following 91-residue polypeptide: Small ribosomal subunit protein bS18 (91 aa).

It belongs to the bacterial ribosomal protein bS18 family. In terms of assembly, part of the 30S ribosomal subunit. Forms a tight heterodimer with protein bS6.

Functionally, binds as a heterodimer with protein bS6 to the central domain of the 16S rRNA, where it helps stabilize the platform of the 30S subunit. In Wolbachia sp. subsp. Brugia malayi (strain TRS), this protein is Small ribosomal subunit protein bS18.